Consider the following 355-residue polypeptide: tRNA uridine(34) hydroxylase (355 aa).

The 95-residue stretch at 146 to 240 (DDPDTLFVDM…YARKAKEQGL (95 aa)) folds into the Rhodanese domain. Cysteine 200 serves as the catalytic Cysteine persulfide intermediate. Residues 333–355 (NKSKGLLQATMHIPSPEKSADEK) are disordered.

The protein belongs to the TrhO family.

The catalysed reaction is uridine(34) in tRNA + AH2 + O2 = 5-hydroxyuridine(34) in tRNA + A + H2O. Catalyzes oxygen-dependent 5-hydroxyuridine (ho5U) modification at position 34 in tRNAs. This is tRNA uridine(34) hydroxylase from Yersinia pseudotuberculosis serotype O:1b (strain IP 31758).